The chain runs to 142 residues: Hemoglobin subunit theta-1 (142 aa).

One can recognise a Globin domain in the interval 2 to 142 (ALAAADRATV…VISALASDCR (141 aa)). Residues histidine 59 and histidine 88 each contribute to the heme b site.

It belongs to the globin family.

This Equus caballus (Horse) protein is Hemoglobin subunit theta-1 (HBQ1).